The following is a 261-amino-acid chain: 7beta-hydroxysteroid dehydrogenase (261 aa).

NADP(+)-binding positions include 17–21 (TEGIG), 40–41 (RR), and 66–67 (DL). Tyr-156 functions as the Proton acceptor in the catalytic mechanism.

Belongs to the short-chain dehydrogenases/reductases (SDR) family. As to quaternary structure, homodimer.

It catalyses the reaction a 7beta-hydroxysteroid + NADP(+) = a 7-oxosteroid + NADPH + H(+). The enzyme catalyses ursocholate + NADP(+) = 3alpha,12alpha-dihydroxy-7-oxo-5beta-cholanate + NADPH + H(+). It carries out the reaction 7-oxolithocholate + NADPH + H(+) = ursodeoxycholate + NADP(+). The catalysed reaction is 3alpha,7beta-dihydroxy-12-oxo-5beta-cholan-24-oate + NADP(+) = 7,12-dioxo-lithocholate + NADPH + H(+). It catalyses the reaction 7beta-hydroxy-3,12-dioxo-5beta-cholan-24-oate + NADP(+) = dehydrocholate + NADPH + H(+). Functionally, 7beta-hydroxysteroid dehydrogenase that catalyzes the reduction of the 7-oxo group of 7-oxosteroids, such as 3alpha,12alpha-dihydroxy-7-oxo-5beta-cholanate, 7-oxolithocholate, 7,12-dioxo-lithocholate and dehydrocholate, to the corresponding 7beta-hydroxysteroids. Is also able to catalyze the reverse oxidation reactions. Together with 7alpha-HSDH encoded in the adjacent gene, is likely involved in the epimerization of the hydroxy group at C-7 of primary bile acids through 7-keto bile acid intermediates. The protein is 7beta-hydroxysteroid dehydrogenase of Clostridium sardiniense (Clostridium absonum).